Reading from the N-terminus, the 102-residue chain is Small ribosomal subunit protein uS10 (102 aa).

Belongs to the universal ribosomal protein uS10 family. As to quaternary structure, part of the 30S ribosomal subunit.

In terms of biological role, involved in the binding of tRNA to the ribosomes. This chain is Small ribosomal subunit protein uS10, found in Streptococcus thermophilus (strain ATCC BAA-250 / LMG 18311).